We begin with the raw amino-acid sequence, 201 residues long: FMN-dependent NADH:quinone oxidoreductase (201 aa).

Residues Ser-10, 16 to 18 (SQS), 96 to 99 (MYNF), and 140 to 143 (SRGG) contribute to the FMN site.

The protein belongs to the azoreductase type 1 family. In terms of assembly, homodimer. FMN is required as a cofactor.

It carries out the reaction 2 a quinone + NADH + H(+) = 2 a 1,4-benzosemiquinone + NAD(+). It catalyses the reaction N,N-dimethyl-1,4-phenylenediamine + anthranilate + 2 NAD(+) = 2-(4-dimethylaminophenyl)diazenylbenzoate + 2 NADH + 2 H(+). Its function is as follows. Quinone reductase that provides resistance to thiol-specific stress caused by electrophilic quinones. Functionally, also exhibits azoreductase activity. Catalyzes the reductive cleavage of the azo bond in aromatic azo compounds to the corresponding amines. The protein is FMN-dependent NADH:quinone oxidoreductase of Shigella boydii serotype 4 (strain Sb227).